The sequence spans 197 residues: Probable GTP-binding protein EngB (197 aa).

Residues 22–195 (QLPELALAGR…WRTILNHLKV (174 aa)) enclose the EngB-type G domain. GTP contacts are provided by residues 30–37 (GRSNVGKS), 57–61 (GKTQT), 75–78 (DVPG), 142–145 (TKAD), and 174–176 (FSS). Residues S37 and T59 each contribute to the Mg(2+) site.

It belongs to the TRAFAC class TrmE-Era-EngA-EngB-Septin-like GTPase superfamily. EngB GTPase family. It depends on Mg(2+) as a cofactor.

In terms of biological role, necessary for normal cell division and for the maintenance of normal septation. The chain is Probable GTP-binding protein EngB from Shouchella clausii (strain KSM-K16) (Alkalihalobacillus clausii).